Here is a 195-residue protein sequence, read N- to C-terminus: Imidazoleglycerol-phosphate dehydratase (195 aa).

The protein belongs to the imidazoleglycerol-phosphate dehydratase family.

It localises to the cytoplasm. It carries out the reaction D-erythro-1-(imidazol-4-yl)glycerol 3-phosphate = 3-(imidazol-4-yl)-2-oxopropyl phosphate + H2O. Its pathway is amino-acid biosynthesis; L-histidine biosynthesis; L-histidine from 5-phospho-alpha-D-ribose 1-diphosphate: step 6/9. The sequence is that of Imidazoleglycerol-phosphate dehydratase from Deinococcus radiodurans (strain ATCC 13939 / DSM 20539 / JCM 16871 / CCUG 27074 / LMG 4051 / NBRC 15346 / NCIMB 9279 / VKM B-1422 / R1).